A 160-amino-acid polypeptide reads, in one-letter code: Transcription elongation factor GreA (160 aa).

The stretch at 2 to 84 (KNTVNDKILL…SKAKIIKADL (83 aa)) forms a coiled coil.

This sequence belongs to the GreA/GreB family.

Functionally, necessary for efficient RNA polymerase transcription elongation past template-encoded arresting sites. The arresting sites in DNA have the property of trapping a certain fraction of elongating RNA polymerases that pass through, resulting in locked ternary complexes. Cleavage of the nascent transcript by cleavage factors such as GreA or GreB allows the resumption of elongation from the new 3'terminus. GreA releases sequences of 2 to 3 nucleotides. This is Transcription elongation factor GreA from Mesomycoplasma hyopneumoniae (strain 232) (Mycoplasma hyopneumoniae).